Reading from the N-terminus, the 271-residue chain is Collectin-11 (271 aa).

The first 25 residues, 1–25, serve as a signal peptide directing secretion; sequence MVGEKLVAYMLVSVLGLALLRSVFG. The Collagen-like domain occupies 44–103; the sequence is GEAGEKGEKGAPGRPGRVGPTGEQGPPGDKGQKGSPGRYGKMGPTGPKGLKGDMGDPGPK. Residues 46–112 are disordered; sequence AGEKGEKGAP…KGPNGEPGVP (67 aa). Residues 124–148 are a coiled coil; it reads EMDIQVVQLTNELKFIKNAVAGIKE. Residues 149-265 form the C-type lectin domain; sequence TDSKVYLLVK…CQLTMYFVCE (117 aa). 2 disulfides stabilise this stretch: cysteine 170-cysteine 264 and cysteine 242-cysteine 256. Position 200 (arginine 200) interacts with a carbohydrate. The Ca(2+) site is built by aspartate 207, glutamate 211, glutamate 232, asparagine 234, asparagine 235, aspartate 238, glutamate 240, and aspartate 241. Glutamate 240 serves as a coordination point for a carbohydrate. A carbohydrate contacts are provided by residues glutamate 244 and 252-254; that span reads IDV. Residue aspartate 253 participates in Ca(2+) binding.

Belongs to the COLEC10/COLEC11 family. In terms of assembly, homotrimer; disulfide-linked. Interacts with MASP1; probably triggers the lectin pathway of complement.

The protein localises to the secreted. Its function is as follows. Lectin that plays a role in innate immunity, apoptosis and embryogenesis. Calcium-dependent lectin that binds self and non-self glycoproteins presenting high mannose oligosaccharides with at least one terminal alpha-1,2-linked mannose epitope. Primarily recognizes the terminal disaccharide of the glycan. Also recognizes a subset of fucosylated glycans and lipopolysaccharides. Plays a role in innate immunity through its ability to bind non-self sugars presented by microorganisms and to activate the complement through the recruitment of MAPS1. Also plays a role in apoptosis through its ability to bind in a calcium-independent manner the DNA present at the surface of apoptotic cells and to activate the complement in response to this binding. Finally, plays a role in development, probably serving as a guidance cue during the migration of neural crest cells and other cell types during embryogenesis. The sequence is that of Collectin-11 (colec11) from Danio rerio (Zebrafish).